Here is a 192-residue protein sequence, read N- to C-terminus: Inosine triphosphate pyrophosphatase (192 aa).

10–15 (TGNANK) contributes to the ITP binding site. Glu43 serves as a coordination point for Mg(2+). Residues Lys56, 74 to 75 (DT), Lys91, 149 to 152 (FGWD), Lys173, and 178 to 179 (HR) contribute to the ITP site.

Belongs to the HAM1 NTPase family. In terms of assembly, homodimer. Mg(2+) is required as a cofactor. Mn(2+) serves as cofactor.

The protein localises to the cytoplasm. It is found in the nucleus. The catalysed reaction is ITP + H2O = IMP + diphosphate + H(+). It carries out the reaction dITP + H2O = dIMP + diphosphate + H(+). It catalyses the reaction XTP + H2O = XMP + diphosphate + H(+). Functionally, pyrophosphatase that hydrolyzes non-canonical purine nucleotides such as inosine triphosphate (ITP), deoxyinosine triphosphate (dITP) or xanthosine 5'-triphosphate (XTP) to their respective monophosphate derivatives. The enzyme does not distinguish between the deoxy- and ribose forms. Probably excludes non-canonical purines from RNA and DNA precursor pools, thus preventing their incorporation into RNA and DNA and avoiding chromosomal lesions. The protein is Inosine triphosphate pyrophosphatase of Candida glabrata (strain ATCC 2001 / BCRC 20586 / JCM 3761 / NBRC 0622 / NRRL Y-65 / CBS 138) (Yeast).